A 393-amino-acid polypeptide reads, in one-letter code: tRNA(Met) cytidine acetate ligase (393 aa).

Residues Gly-81, Asn-142, and Arg-167 each coordinate ATP.

This sequence belongs to the TmcAL family.

It localises to the cytoplasm. It catalyses the reaction cytidine(34) in elongator tRNA(Met) + acetate + ATP = N(4)-acetylcytidine(34) in elongator tRNA(Met) + AMP + diphosphate. In terms of biological role, catalyzes the formation of N(4)-acetylcytidine (ac(4)C) at the wobble position of elongator tRNA(Met), using acetate and ATP as substrates. First activates an acetate ion to form acetyladenylate (Ac-AMP) and then transfers the acetyl group to tRNA to form ac(4)C34. This is tRNA(Met) cytidine acetate ligase from Bacillus cereus (strain ATCC 10987 / NRS 248).